Consider the following 170-residue polypeptide: Small ribosomal subunit protein uS5 (170 aa).

The 64-residue stretch at 16 to 79 (IEDQLVAINR…EAGKKNMISV (64 aa)) folds into the S5 DRBM domain.

It belongs to the universal ribosomal protein uS5 family. Part of the 30S ribosomal subunit. Contacts proteins S4 and S8.

Its function is as follows. With S4 and S12 plays an important role in translational accuracy. Located at the back of the 30S subunit body where it stabilizes the conformation of the head with respect to the body. The sequence is that of Small ribosomal subunit protein uS5 from Lactobacillus delbrueckii subsp. bulgaricus (strain ATCC 11842 / DSM 20081 / BCRC 10696 / JCM 1002 / NBRC 13953 / NCIMB 11778 / NCTC 12712 / WDCM 00102 / Lb 14).